Consider the following 378-residue polypeptide: Probable 3-hydroxyisobutyryl-CoA hydrolase 3 (378 aa).

Residues Glu138 and Asp146 each coordinate substrate.

Belongs to the enoyl-CoA hydratase/isomerase family.

The protein localises to the peroxisome. The catalysed reaction is 3-hydroxy-2-methylpropanoyl-CoA + H2O = 3-hydroxy-2-methylpropanoate + CoA + H(+). Its pathway is amino-acid degradation; L-valine degradation. Involved in valine catabolism. The chain is Probable 3-hydroxyisobutyryl-CoA hydrolase 3 from Arabidopsis thaliana (Mouse-ear cress).